Consider the following 339-residue polypeptide: MQKLKVFLSDSLNPHLNLATEEWIFHNLDPSQQVLFLWRNEETVVIGRNQNPWSECNLAKMKDEKVHLARRTTGGGAVFHDLQNTNFTFLSPKESYKRENNVQIIFDALKTFGIQGEASGRNDLLIPFPDGPRKFSGSAYREKKDRAFHHGTLLLNTDLTRLGNYLTPNPKKLQAKGKESVRARVANLTEVSPGINHDQIVTTMVKSFENFYAGKAEVESLTMESLKLIPELKEQYEQLSSWEWLYGNTLEFSHKMDEYLTLGFFDFHFKVEDGQIKDLKIYTDCLYPQVIEDLTESLRGKAYRGDAVREALMSVRGKHTELNLGLSEVEEWLCKNIEI.

The BPL/LPL catalytic domain maps to 29–216 (DPSQQVLFLW…SFENFYAGKA (188 aa)). Residues Arg-71, 76-79 (GAVF), and Lys-134 each bind ATP. Lys-134 is a (R)-lipoate binding site.

It belongs to the LplA family. As to quaternary structure, monomer.

It is found in the cytoplasm. It catalyses the reaction L-lysyl-[lipoyl-carrier protein] + (R)-lipoate + ATP = N(6)-[(R)-lipoyl]-L-lysyl-[lipoyl-carrier protein] + AMP + diphosphate + H(+). It participates in protein modification; protein lipoylation via exogenous pathway; protein N(6)-(lipoyl)lysine from lipoate: step 1/2. The protein operates within protein modification; protein lipoylation via exogenous pathway; protein N(6)-(lipoyl)lysine from lipoate: step 2/2. Its function is as follows. Catalyzes both the ATP-dependent activation of exogenously supplied lipoate to lipoyl-AMP and the transfer of the activated lipoyl onto the lipoyl domains of lipoate-dependent enzymes. The polypeptide is Lipoate-protein ligase A (Bdellovibrio bacteriovorus (strain ATCC 15356 / DSM 50701 / NCIMB 9529 / HD100)).